Consider the following 261-residue polypeptide: MIVIKAGGRVIKNNLDGIIESLSNVGEQAIFVHGGGDQVTETSKKLGIEPVFVTSPEGIRSRYTSKEELEVFIMVMSLISRQIVSKLAYKKKVISLTGADGNSVIAERKKKIIIIDERGRKRIVDGGYTGKIKKVDSLVISDLLKSFDLLVFAPLAYDPEEKTLLNVDGDQMAFAIATAMKADTLILLTDVEGVLVDGKVINKLTSKEAKELSKRIGPGMNRKLLMAGETIENGVKKVIISSGLVQDPISNALQLRGTVIM.

Substrate-binding positions include 35–36 (GG), Arg-62, and Asn-166.

The protein belongs to the acetylglutamate kinase family. LysZ subfamily.

Its subcellular location is the cytoplasm. The catalysed reaction is [amino-group carrier protein]-C-terminal-N-(1,4-dicarboxybutan-1-yl)-L-glutamine + ATP = [amino-group carrier protein]-C-terminal-N-(1-carboxy-5-phosphooxy-5-oxopentan-1-yl)-L-glutamine + ADP. It catalyses the reaction [amino-group carrier protein]-C-terminal-gamma-(L-glutamyl)-L-glutamate + ATP = [amino-group carrier protein]-C-terminal-gamma-(5-phospho-L-glutamyl)-L-glutamate + ADP. It participates in amino-acid biosynthesis; L-lysine biosynthesis via AAA pathway; L-lysine from L-alpha-aminoadipate (Thermus route): step 2/5. The protein operates within amino-acid biosynthesis; L-arginine biosynthesis. Its function is as follows. Involved in both the arginine and lysine biosynthetic pathways. Phosphorylates the LysW-bound precursors glutamate (for arginine biosynthesis), respectively alpha-aminoadipate (for lysine biosynthesis). The chain is [LysW]-aminoadipate/[LysW]-glutamate kinase from Sulfurisphaera tokodaii (strain DSM 16993 / JCM 10545 / NBRC 100140 / 7) (Sulfolobus tokodaii).